The following is a 1491-amino-acid chain: Chromosome partition protein MukB (1491 aa).

34-41 (GGNGAGKS) serves as a coordination point for ATP. 5 coiled-coil regions span residues 302–450 (LIEQ…LKAE), 490–600 (ARSE…RFES), 781–806 (RAAR…AKAS), 836–1109 (EQAL…DLRT), and 1210–1239 (VEAI…ISSD). A flexible hinge region spans residues 667–784 (PGGSNDPRLK…AIPLFGRAAR (118 aa)). Residues 1059–1080 (QRRRDELQERLHTSRSRKSEYE) form a disordered region.

The protein belongs to the SMC family. MukB subfamily. In terms of assembly, homodimerization via its hinge domain. Binds to DNA via its C-terminal region. Interacts, and probably forms a ternary complex, with MukE and MukF via its C-terminal region. The complex formation is stimulated by calcium or magnesium. Interacts with tubulin-related protein FtsZ.

Its subcellular location is the cytoplasm. The protein resides in the nucleoid. Its function is as follows. Plays a central role in chromosome condensation, segregation and cell cycle progression. Functions as a homodimer, which is essential for chromosome partition. Involved in negative DNA supercoiling in vivo, and by this means organize and compact chromosomes. May achieve or facilitate chromosome segregation by condensation DNA from both sides of a centrally located replisome during cell division. This is Chromosome partition protein MukB from Vibrio cholerae serotype O1 (strain ATCC 39315 / El Tor Inaba N16961).